We begin with the raw amino-acid sequence, 177 residues long: MASSMMASTAAAVARAGPAQSSMVPFNACRSSVPFPATRKANNNLSTLPGNGGRVSCMQVWPPEGLKKFETLSYLPPLSVEDLAKEVDYLLRNDWVPCIEFSKEGFVYRENHASPGYYDGRYWTMWKLPMFGCTDASQVIAEVEEAKKAYPEYFVRIIGFDNKRQVQCISFIAYKPT.

The N-terminal 56 residues, 1 to 56, are a transit peptide targeting the chloroplast; sequence MASSMMASTAAAVARAGPAQSSMVPFNACRSSVPFPATRKANNNLSTLPGNGGRVS.

Belongs to the RuBisCO small chain family. In terms of assembly, heterohexadecamer of 8 large and 8 small subunits.

It is found in the plastid. Its subcellular location is the chloroplast. RuBisCO catalyzes two reactions: the carboxylation of D-ribulose 1,5-bisphosphate, the primary event in carbon dioxide fixation, as well as the oxidative fragmentation of the pentose substrate. Both reactions occur simultaneously and in competition at the same active site. Although the small subunit is not catalytic it is essential for maximal activity. The protein is Ribulose bisphosphate carboxylase small subunit, chloroplastic 3 of Lemna gibba (Swollen duckweed).